The primary structure comprises 536 residues: Probable cytochrome P450 318a1 (536 aa).

Positions 439-457 (EEEQLSKGHNDSGSGEKRR) are enriched in basic and acidic residues. Positions 439 to 460 (EEEQLSKGHNDSGSGEKRRQRD) are disordered. C477 lines the heme pocket.

Belongs to the cytochrome P450 family. Requires heme as cofactor.

The protein localises to the endoplasmic reticulum membrane. It is found in the microsome membrane. In terms of biological role, may be involved in the metabolism of insect hormones and in the breakdown of synthetic insecticides. The sequence is that of Probable cytochrome P450 318a1 (Cyp318a1) from Drosophila melanogaster (Fruit fly).